A 267-amino-acid polypeptide reads, in one-letter code: Matrilysin (267 aa).

The N-terminal stretch at 1 to 17 (MRLTVLCAVCLLPGSLA) is a signal peptide. A propeptide spans 18 to 94 (LPLPQEAGGM…PRCGVPDVAE (77 aa)) (activation peptide). Positions 85–92 (PRCGVPDV) match the Cysteine switch motif. C87 is a binding site for Zn(2+). D153 lines the Ca(2+) pocket. 2 residues coordinate Zn(2+): H163 and D165. The Ca(2+) site is built by D170, G171, G173, and T175. H178 is a binding site for Zn(2+). Residues G185, G187, and D189 each coordinate Ca(2+). A Zn(2+)-binding site is contributed by H191. Residues D193 and E196 each contribute to the Ca(2+) site. H214 is a Zn(2+) binding site. E215 is a catalytic residue. Residues H218 and H224 each contribute to the Zn(2+) site.

This sequence belongs to the peptidase M10A family. The cofactor is Ca(2+). It depends on Zn(2+) as a cofactor.

The protein localises to the secreted. The protein resides in the extracellular space. It localises to the extracellular matrix. The enzyme catalyses Cleavage of 14-Ala-|-Leu-15 and 16-Tyr-|-Leu-17 in B chain of insulin. No action on collagen types I, II, IV, V. Cleaves gelatin chain alpha2(I) &gt; alpha1(I).. Degrades casein, gelatins of types I, III, IV, and V, and fibronectin. Activates procollagenase. The chain is Matrilysin (MMP7) from Homo sapiens (Human).